The primary structure comprises 353 residues: MEEISARLNAVQEKILDLYEADKTDLPSQIEHWKLIRMECALLYTAKQMGFSHLCHQVVPSLLASKTKAFQVIELQMALETLSKSQYSTSQWTLQQTSLEVWLCEPPKCFKKQGETVTVQYDNDKKNTMDYTNWGEIYIIEEDTCTMVTGKVDYIGMYYIHNCEKVYFKYFKEDAAKYSKTQMWEVHVGGQVIVCPTSISSNQISTTETADIQTDNDNRPPQAAAKRRRPADTTDTAQPLTKLFCADPALDNRTARTATNCTNKQRTVCSSNVAPIVHLKGESNSLKCLRYRLKPYKELYSSMSSTWHWTSDNKNSKNGIVTVTFVTEQQQQMFLGTVKIPPTVQISTGFMTL.

The interval 1–200 (MEEISARLNA…QVIVCPTSIS (200 aa)) is transactivation domain. The segment covering 206 to 215 (TTETADIQTD) has biased composition (polar residues). The interval 206–234 (TTETADIQTDNDNRPPQAAAKRRRPADTT) is disordered. A DNA-binding domain region spans residues 273-353 (VAPIVHLKGE…VQISTGFMTL (81 aa)). Lysine 280 is covalently cross-linked (Glycyl lysine isopeptide (Lys-Gly) (interchain with G-Cter in SUMO)).

This sequence belongs to the papillomaviridae E2 protein family. As to quaternary structure, binds DNA as homodimer. Interacts with protein E1; this interaction greatly increases E1 DNA-binding activity. Interacts with protein L1; this interaction enhances E2-dependent replication and transcription activation. Interacts with protein L2; this interaction inhibits E2 transcriptional activity but not DNA replication function E2. Interacts with protein E7; this interaction inhibits E7 oncogenic activity. Interacts with host TAF1; this interaction modulates E2-dependent transcriptional regulation. Interacts with host BRD4; this interaction mediates E2 transcriptional activation function. Additionally, the interaction with host BRD4 on mitotic chromosomes mediates tethering of the viral genome. Interacts with host TOPBP1; this interaction is required for optimal viral DNA replication. In terms of processing, phosphorylated. Post-translationally, sumoylation plays a regulatory role in E2 transcriptional activity.

The protein localises to the host nucleus. Functionally, plays a role in the initiation of viral DNA replication. A dimer of E2 interacts with a dimer of E1 in order to improve specificity of E1 DNA binding activity. Once the complex recognizes and binds DNA at specific sites, the E2 dimer is removed from DNA. E2 also regulates viral transcription through binding to the E2RE response element (5'-ACCNNNNNNGGT-3') present in multiple copies in the regulatory regions of the viral genome. Activates or represses transcription depending on E2RE's position with regards to proximal promoter elements including the TATA-box. Repression occurs by sterically hindering the assembly of the transcription initiation complex. The protein is Regulatory protein E2 of Homo sapiens (Human).